A 427-amino-acid polypeptide reads, in one-letter code: UPF0229 protein KPN78578_11640 (427 aa).

A disordered region spans residues 72–109 (RNRVHPGNDHFVQNDRIERPQGGGGGGGSGQGQASADG). Basic and acidic residues predominate over residues 77-90 (PGNDHFVQNDRIER). A compositionally biased stretch (gly residues) spans 92 to 102 (QGGGGGGGSGQ).

This sequence belongs to the UPF0229 family.

This is UPF0229 protein KPN78578_11640 from Klebsiella pneumoniae subsp. pneumoniae (strain ATCC 700721 / MGH 78578).